A 212-amino-acid polypeptide reads, in one-letter code: Thymidylate kinase (212 aa).

Position 11–18 (11–18 (GPDGAGKT)) interacts with ATP.

The protein belongs to the thymidylate kinase family.

The catalysed reaction is dTMP + ATP = dTDP + ADP. Its function is as follows. Phosphorylation of dTMP to form dTDP in both de novo and salvage pathways of dTTP synthesis. This Streptococcus mutans serotype c (strain ATCC 700610 / UA159) protein is Thymidylate kinase.